Here is a 32-residue protein sequence, read N- to C-terminus: Potassium channel toxin alpha-KTx 10.6 (32 aa).

Disulfide bonds link Cys3/Cys22, Cys8/Cys27, and Cys12/Cys29.

Expressed by the venom gland.

Its subcellular location is the secreted. Its function is as follows. Blocks human voltage-gated potassium (Kv) channels Kv1.2/KCNA2 and Kv1.3/KCNA3. Does not block human Kv1.1 at 100nM concentration. The polypeptide is Potassium channel toxin alpha-KTx 10.6 (Centruroides bonito (Scorpion)).